The chain runs to 343 residues: Homeobox-leucine zipper protein HOX16 (343 aa).

Positions 74–133 (LPEKKRRLTPEQVHLLERSFEEENKLEPERKTELARKLGLQPRQVAVWFQNRRARWKTKQ) form a DNA-binding region, homeobox. The tract at residues 132 to 176 (KQLERDFDRLKASFDALRADHDALLQDNHRLHSQVMSLTEKLQEK) is leucine-zipper. Residues 218–239 (FEEQQEQQVKAEDRLSTGSGGS) are disordered.

The protein belongs to the HD-ZIP homeobox family. Class I subfamily. In terms of tissue distribution, expressed in seedlings, stems, leaf sheaths and blades and panicles.

The protein resides in the nucleus. Probable transcription factor. The polypeptide is Homeobox-leucine zipper protein HOX16 (HOX16) (Oryza sativa subsp. japonica (Rice)).